A 139-amino-acid chain; its full sequence is MGITALAFDFGTKSIGCAIGQSITGTAQALPAFKAQDGIPNWEAIEKCLKEWKPDVVIVGLPLNMDGTEQNLTLLARKFANRLQGRFGVNVHLQDERLTTTQARSEIFERGGFKALKKGKVDGISACLILESWFECTEY.

This sequence belongs to the YqgF nuclease family.

Its subcellular location is the cytoplasm. In terms of biological role, could be a nuclease involved in processing of the 5'-end of pre-16S rRNA. This chain is Putative pre-16S rRNA nuclease, found in Haemophilus influenzae (strain PittEE).